We begin with the raw amino-acid sequence, 138 residues long: Large ribosomal subunit protein uL16c (138 aa).

Belongs to the universal ribosomal protein uL16 family. Part of the 50S ribosomal subunit.

It localises to the plastid. The protein localises to the chloroplast. The polypeptide is Large ribosomal subunit protein uL16c (Emiliania huxleyi (Coccolithophore)).